Consider the following 123-residue polypeptide: Large ribosomal subunit protein uL14 (123 aa).

The protein belongs to the universal ribosomal protein uL14 family. Part of the 50S ribosomal subunit. Forms a cluster with proteins L3 and L19. In the 70S ribosome, L14 and L19 interact and together make contacts with the 16S rRNA in bridges B5 and B8.

In terms of biological role, binds to 23S rRNA. Forms part of two intersubunit bridges in the 70S ribosome. The chain is Large ribosomal subunit protein uL14 from Zymomonas mobilis subsp. mobilis (strain ATCC 31821 / ZM4 / CP4).